A 124-amino-acid polypeptide reads, in one-letter code: Small ribosomal subunit protein uS12c (124 aa).

The segment at 105–124 (AGVKDRRQSRSKYGAKRPKA) is disordered. Over residues 113-124 (SRSKYGAKRPKA) the composition is skewed to basic residues.

The protein belongs to the universal ribosomal protein uS12 family. As to quaternary structure, part of the 30S ribosomal subunit.

It is found in the plastid. It localises to the cyanelle. Its function is as follows. With S4 and S5 plays an important role in translational accuracy. Located at the interface of the 30S and 50S subunits. The chain is Small ribosomal subunit protein uS12c (rps12) from Cyanophora paradoxa.